Reading from the N-terminus, the 169-residue chain is Probable inosine/xanthosine triphosphatase (169 aa).

A substrate-binding site is contributed by 7 to 12 (STNKAK). A Mg(2+)-binding site is contributed by glutamate 35.

It belongs to the YjjX NTPase family. Homodimer. It depends on Mg(2+) as a cofactor. Mn(2+) serves as cofactor.

The enzyme catalyses XTP + H2O = XDP + phosphate + H(+). It catalyses the reaction ITP + H2O = IDP + phosphate + H(+). In terms of biological role, phosphatase that hydrolyzes non-canonical purine nucleotides such as XTP and ITP to their respective diphosphate derivatives. Probably excludes non-canonical purines from DNA/RNA precursor pool, thus preventing their incorporation into DNA/RNA and avoiding chromosomal lesions. This chain is Probable inosine/xanthosine triphosphatase, found in Sulfurisphaera tokodaii (strain DSM 16993 / JCM 10545 / NBRC 100140 / 7) (Sulfolobus tokodaii).